The sequence spans 482 residues: Adenylyltransferase and sulfurtransferase uba4 (482 aa).

Positions 33–57 (EGAALRAQSQKTASANATTGQRTKS) are disordered. Over residues 39–54 (AQSQKTASANATTGQR) the composition is skewed to polar residues. Residues Gly98, Asp119, 126–130 (SNLHR), Lys143, and 187–188 (DN) each bind ATP. Positions 236 and 239 each coordinate Zn(2+). Cys253 (glycyl thioester intermediate; for adenylyltransferase activity) is an active-site residue. Positions 315 and 318 each coordinate Zn(2+). The Rhodanese domain maps to 366–480 (AGAQRHIIDV…WREQVDPDWP (115 aa)). Cys435 serves as the catalytic Cysteine persulfide intermediate; for sulfurtransferase activity.

This sequence in the N-terminal section; belongs to the HesA/MoeB/ThiF family. UBA4 subfamily. Requires Zn(2+) as cofactor.

Its subcellular location is the cytoplasm. It is found in the cytosol. The catalysed reaction is [molybdopterin-synthase sulfur-carrier protein]-C-terminal Gly-Gly + ATP + H(+) = [molybdopterin-synthase sulfur-carrier protein]-C-terminal Gly-Gly-AMP + diphosphate. It catalyses the reaction [molybdopterin-synthase sulfur-carrier protein]-C-terminal Gly-Gly-AMP + S-sulfanyl-L-cysteinyl-[cysteine desulfurase] + AH2 = [molybdopterin-synthase sulfur-carrier protein]-C-terminal-Gly-aminoethanethioate + L-cysteinyl-[cysteine desulfurase] + A + AMP + 2 H(+). Its pathway is tRNA modification; 5-methoxycarbonylmethyl-2-thiouridine-tRNA biosynthesis. It participates in cofactor biosynthesis; molybdopterin biosynthesis. Its function is as follows. Plays a central role in 2-thiolation of mcm(5)S(2)U at tRNA wobble positions of cytosolic tRNA(Lys), tRNA(Glu) and tRNA(Gln). Also essential during biosynthesis of the molybdenum cofactor. Acts by mediating the C-terminal thiocarboxylation of sulfur carriers urm1 and mocs2a. Its N-terminus first activates urm1 and mocs2a as acyl-adenylates (-COAMP), then the persulfide sulfur on the catalytic cysteine is transferred to urm1 and mocs2a to form thiocarboxylation (-COSH) of their C-terminus. The reaction probably involves hydrogen sulfide that is generated from the persulfide intermediate and that acts as a nucleophile towards urm1 and mocs2a. Subsequently, a transient disulfide bond is formed. Does not use thiosulfate as sulfur donor; nfs1 probably acting as a sulfur donor for thiocarboxylation reactions. In Emericella nidulans (strain FGSC A4 / ATCC 38163 / CBS 112.46 / NRRL 194 / M139) (Aspergillus nidulans), this protein is Adenylyltransferase and sulfurtransferase uba4.